Reading from the N-terminus, the 448-residue chain is uncharacterized protein (448 aa).

Residues 19-41 traverse the membrane as a helical segment; that stretch reads LGLLVPFLLLLFSCTNTVGYGVL. The region spanning 105–181 is the SH3b domain; the sequence is YSYATSVLDG…CFSHGLSLFD (77 aa).

It is found in the membrane. This is an uncharacterized protein from Treponema pallidum (strain Nichols).